The primary structure comprises 626 residues: tRNA uridine 5-carboxymethylaminomethyl modification enzyme MnmG (626 aa).

14–19 serves as a coordination point for FAD; sequence GAGHAG. An NAD(+)-binding site is contributed by 273-287; the sequence is GPRYCPSIEDKVVRF.

This sequence belongs to the MnmG family. Homodimer. Heterotetramer of two MnmE and two MnmG subunits. FAD is required as a cofactor.

The protein localises to the cytoplasm. Functionally, NAD-binding protein involved in the addition of a carboxymethylaminomethyl (cmnm) group at the wobble position (U34) of certain tRNAs, forming tRNA-cmnm(5)s(2)U34. This chain is tRNA uridine 5-carboxymethylaminomethyl modification enzyme MnmG, found in Caldicellulosiruptor saccharolyticus (strain ATCC 43494 / DSM 8903 / Tp8T 6331).